We begin with the raw amino-acid sequence, 823 residues long: Protein Jade-3 (823 aa).

Residues 1–40 (MKRHRPVSSSESSDECPSTSFTSSSMYRKKSKNPKEQKKS) form a disordered region. The segment covering 8–20 (SSSESSDECPSTS) has biased composition (low complexity). 3 positions are modified to N6-acetyllysine: K30, K32, and K35. A PHD-type 1 zinc finger spans residues 200 to 250 (DVICDVCRSPDSEEGNDMVFCDKCNVCVHQACYGILKIPEGSWLCRSCVLG). A C2HC pre-PHD-type zinc finger spans residues 252 to 286 (YPQCVLCPKKGGAMKTTRTGTKWAHVSCALWIPEV). The PHD-type 2 zinc finger occupies 310–366 (LVCNLCKLKTGACIQCSVKSCITAFHVTCAFEHGLEMKTILDEGDEVKFKSFCLKHS). Disordered stretches follow at residues 543–585 (LKMP…PEEP) and 601–631 (KSNC…AEFY). The span at 549-562 (TSEDCKDSSTETEH) shows a compositional bias: basic and acidic residues. 2 positions are modified to phosphoserine: S566 and S578. At K601 the chain carries N6-acetyllysine. S608 carries the post-translational modification Phosphoserine. K638 carries the post-translational modification N6-acetyllysine. The interval 651 to 676 (SIGNGKNQPNSRVSSSNGLEGNWSGN) is disordered. K735 is subject to N6-acetyllysine. The interval 756 to 823 (TGRASYQETD…HPHSHSSMQR (68 aa)) is disordered. A phosphoserine mark is found at S774 and S776. Residues 781 to 809 (EGSKETPRVKRESSDRENPSHDSARECHG) show a composition bias toward basic and acidic residues.

The protein belongs to the JADE family. Component of the HBO1 complex composed at least of ING4 or ING5, MYST2/HBO1, MEAF6, and one of JADE1, JADE2 and JADE3.

Functionally, scaffold subunit of some HBO1 complexes, which have a histone H4 acetyltransferase activity. The polypeptide is Protein Jade-3 (Jade3) (Mus musculus (Mouse)).